Consider the following 417-residue polypeptide: DNA-directed RNA polymerase subunit beta (417 aa).

It belongs to the RNA polymerase beta chain family. In terms of assembly, in plastids the minimal PEP RNA polymerase catalytic core is composed of four subunits: alpha, beta, beta', and beta''. When a (nuclear-encoded) sigma factor is associated with the core the holoenzyme is formed, which can initiate transcription.

It is found in the plastid. The protein resides in the chloroplast. It carries out the reaction RNA(n) + a ribonucleoside 5'-triphosphate = RNA(n+1) + diphosphate. In terms of biological role, DNA-dependent RNA polymerase catalyzes the transcription of DNA into RNA using the four ribonucleoside triphosphates as substrates. The polypeptide is DNA-directed RNA polymerase subunit beta (rpoB) (Saponaria officinalis (Common soapwort)).